Here is a 146-residue protein sequence, read N- to C-terminus: UPF0178 protein BCAH187_A3092 (146 aa).

Belongs to the UPF0178 family.

The polypeptide is UPF0178 protein BCAH187_A3092 (Bacillus cereus (strain AH187)).